Consider the following 129-residue polypeptide: uncharacterized protein (129 aa).

A signal peptide spans 1-17; that stretch reads MCPECFFLMLFFCGYRA. Low complexity predominate over residues 26 to 36; sequence SSSSSSSFRSS. The disordered stretch occupies residues 26-76; it reads SSSSSSSFRSSPAYGFSGRPPGGAGCRERSQRSCLRPGGLPSLTRNPGLQR.

This is an uncharacterized protein from Escherichia coli O157:H7.